Here is a 313-residue protein sequence, read N- to C-terminus: Protein phosphatase PTC7 homolog fig (313 aa).

One can recognise a PPM-type phosphatase domain in the interval 47 to 307; it reads KEPLTDLQLR…DDITVILASL (261 aa). Mn(2+)-binding residues include aspartate 83, glycine 84, and aspartate 229.

It belongs to the PP2C family. Mg(2+) is required as a cofactor. The cofactor is Mn(2+).

It carries out the reaction O-phospho-L-seryl-[protein] + H2O = L-seryl-[protein] + phosphate. The enzyme catalyses O-phospho-L-threonyl-[protein] + H2O = L-threonyl-[protein] + phosphate. In Drosophila virilis (Fruit fly), this protein is Protein phosphatase PTC7 homolog fig.